Consider the following 161-residue polypeptide: Shikimate kinase (161 aa).

10-15 (GAGKTT) is an ATP binding site. Residue Thr14 coordinates Mg(2+). Substrate-binding residues include Asp28, Arg52, and Gly74. Arg114 contacts ATP. Substrate is bound at residue Arg132.

This sequence belongs to the shikimate kinase family. Monomer. Mg(2+) is required as a cofactor.

The protein localises to the cytoplasm. The catalysed reaction is shikimate + ATP = 3-phosphoshikimate + ADP + H(+). The protein operates within metabolic intermediate biosynthesis; chorismate biosynthesis; chorismate from D-erythrose 4-phosphate and phosphoenolpyruvate: step 5/7. Functionally, catalyzes the specific phosphorylation of the 3-hydroxyl group of shikimic acid using ATP as a cosubstrate. This chain is Shikimate kinase, found in Streptococcus gordonii (strain Challis / ATCC 35105 / BCRC 15272 / CH1 / DL1 / V288).